The primary structure comprises 99 residues: Cell division protein FtsB (99 aa).

Topologically, residues 1–3 are cytoplasmic; sequence MRV. A helical membrane pass occupies residues 4–21; sequence FTAILLILLVLLQYRLWF. Residues 22–99 lie on the Periplasmic side of the membrane; that stretch reads GKNSVPDYLV…KENSTRNVNN (78 aa). Residues 29-53 are a coiled coil; sequence YLVLKENVVRQQSANEKLQQRNKLL.

The protein belongs to the FtsB family. Part of a complex composed of FtsB, FtsL and FtsQ.

The protein resides in the cell inner membrane. Essential cell division protein. May link together the upstream cell division proteins, which are predominantly cytoplasmic, with the downstream cell division proteins, which are predominantly periplasmic. The polypeptide is Cell division protein FtsB (Colwellia psychrerythraea (strain 34H / ATCC BAA-681) (Vibrio psychroerythus)).